Here is a 122-residue protein sequence, read N- to C-terminus: Large ribosomal subunit protein uL14 (122 aa).

It belongs to the universal ribosomal protein uL14 family. In terms of assembly, part of the 50S ribosomal subunit. Forms a cluster with proteins L3 and L19. In the 70S ribosome, L14 and L19 interact and together make contacts with the 16S rRNA in bridges B5 and B8.

In terms of biological role, binds to 23S rRNA. Forms part of two intersubunit bridges in the 70S ribosome. This chain is Large ribosomal subunit protein uL14, found in Trichlorobacter lovleyi (strain ATCC BAA-1151 / DSM 17278 / SZ) (Geobacter lovleyi).